The following is a 103-amino-acid chain: Large ribosomal subunit protein bL21 (103 aa).

Belongs to the bacterial ribosomal protein bL21 family. As to quaternary structure, part of the 50S ribosomal subunit. Contacts protein L20.

Its function is as follows. This protein binds to 23S rRNA in the presence of protein L20. This chain is Large ribosomal subunit protein bL21, found in Enterobacter sp. (strain 638).